Reading from the N-terminus, the 105-residue chain is Large ribosomal subunit protein uL24 (105 aa).

It belongs to the universal ribosomal protein uL24 family. As to quaternary structure, part of the 50S ribosomal subunit.

In terms of biological role, one of two assembly initiator proteins, it binds directly to the 5'-end of the 23S rRNA, where it nucleates assembly of the 50S subunit. One of the proteins that surrounds the polypeptide exit tunnel on the outside of the subunit. The sequence is that of Large ribosomal subunit protein uL24 from Methylocella silvestris (strain DSM 15510 / CIP 108128 / LMG 27833 / NCIMB 13906 / BL2).